A 454-amino-acid chain; its full sequence is Chromosomal replication initiator protein DnaA (454 aa).

Residues methionine 1–tyrosine 79 form a domain I, interacts with DnaA modulators region. Positions tyrosine 79–serine 117 are domain II. The segment at asparagine 118 to serine 334 is domain III, AAA+ region. ATP-binding residues include glycine 162, glycine 164, lysine 165, and threonine 166. Positions arginine 335–lysine 454 are domain IV, binds dsDNA.

The protein belongs to the DnaA family. In terms of assembly, oligomerizes as a right-handed, spiral filament on DNA at oriC.

It is found in the cytoplasm. Functionally, plays an essential role in the initiation and regulation of chromosomal replication. ATP-DnaA binds to the origin of replication (oriC) to initiate formation of the DNA replication initiation complex once per cell cycle. Binds the DnaA box (a 9 base pair repeat at the origin) and separates the double-stranded (ds)DNA. Forms a right-handed helical filament on oriC DNA; dsDNA binds to the exterior of the filament while single-stranded (ss)DNA is stabiized in the filament's interior. The ATP-DnaA-oriC complex binds and stabilizes one strand of the AT-rich DNA unwinding element (DUE), permitting loading of DNA polymerase. After initiation quickly degrades to an ADP-DnaA complex that is not apt for DNA replication. Binds acidic phospholipids. The protein is Chromosomal replication initiator protein DnaA of Buchnera aphidicola subsp. Acyrthosiphon pisum (strain 5A).